The following is a 258-amino-acid chain: 5-oxoprolinase subunit A 2 (258 aa).

This sequence belongs to the LamB/PxpA family. As to quaternary structure, forms a complex composed of PxpA, PxpB and PxpC.

It catalyses the reaction 5-oxo-L-proline + ATP + 2 H2O = L-glutamate + ADP + phosphate + H(+). Functionally, catalyzes the cleavage of 5-oxoproline to form L-glutamate coupled to the hydrolysis of ATP to ADP and inorganic phosphate. The sequence is that of 5-oxoprolinase subunit A 2 from Pseudomonas putida (strain ATCC 47054 / DSM 6125 / CFBP 8728 / NCIMB 11950 / KT2440).